Reading from the N-terminus, the 919-residue chain is MRPSDDHGETSEFLPITRSRSVSAASQTSTDSSLSTESLFPGEQKPFPNVNGTMALADDDQYRDLEDGEVEQTEPFLASSKKAATGGGRARRIFWILVLLCLGGWLLAFALFLTGGRANYQTASDALQAHGADSALGSTSTSSGKPVTLQQVLAGQWNPRYHAIGWVAGPNNEDGLLVEKGGDEKQGYLRVDDIRSRKGNDTGRESRVLMWKPIVHVDGKAIVPSNVWPSPDLKKVLLISEQQKNWRHSFTGKYWVLDVDSQTAQPLDPSAPDGRVQLALWSPASDAVVFVRDNNLYLRRLSSDSVVVITKDGGENLFYGVPDWVYEEEVISGNSVTWWSNDAKYIAFFRTNETSVPEFPVQYYISRPSGKKPLPGLENYPDVREIKYPKPGAPNPVVDLQFYDVDKNEVFSVEVADDFADDDRIIIEVLWASEGKVLVRSTNRESDILKVYLIDTKSRTGKLVRSEDVAGLDGGWVEPSQSTRFIPADPNNGRPHDGYIDTVPYNGYDHLAYFSPLDSPNALMLTSGEWEVVDAPAAVDLQRGLVYFVGTREAPTQRHVYRVQLDGSNLKPLTDTSKPGYYDVSFSHGTGYALLTYKGPSIPWQAIIKTQGDEITYEDRIEDNAQLTKMVEAYALPTEIYQNVTVDGYTLQLVERRPPHFNPAKKYPVLFYLYGGPGSQTVDRKFTVDFQSYVASSLGYIVVTVDGRGTGFIGRKARCIVRGNLGFYEAHDQIATAKMWAAKSYVDETRMAIWGWSFGGFMTLKTLEQDAGQTFQYGMAVAPVTDWRFYDSIYTERYMHTPQHNPSGYDNSTITDMAALSESVRFLVMHGASDDNVHLQNTLVLIDKLDLSNVENYDLQFYPDSDHSIYFHNAHTMVYDRLSDWLVNAFNGEWHLIAKPVPDESMWERMKRSLPLLYP.

Positions 1-10 (MRPSDDHGET) are enriched in basic and acidic residues. Residues 1-50 (MRPSDDHGETSEFLPITRSRSVSAASQTSTDSSLSTESLFPGEQKPFPNV) are disordered. Residues 1–92 (MRPSDDHGET…AATGGGRARR (92 aa)) are Cytoplasmic-facing. A compositionally biased stretch (low complexity) spans 21-38 (SVSAASQTSTDSSLSTES). A helical; Signal-anchor for type II membrane protein membrane pass occupies residues 93–113 (IFWILVLLCLGGWLLAFALFL). At 114–919 (TGGRANYQTA…MKRSLPLLYP (806 aa)) the chain is on the vacuolar side. Residues N200, N352, and N643 are each glycosylated (N-linked (GlcNAc...) asparagine). S757 acts as the Charge relay system in catalysis. Residue N811 is glycosylated (N-linked (GlcNAc...) asparagine). Active-site charge relay system residues include D834 and H867.

The protein belongs to the peptidase S9B family.

Its subcellular location is the vacuole membrane. The catalysed reaction is Release of an N-terminal dipeptide, Xaa-Yaa-|-Zaa-, from a polypeptide, preferentially when Yaa is Pro, provided Zaa is neither Pro nor hydroxyproline.. Functionally, type IV dipeptidyl-peptidase which removes N-terminal dipeptides sequentially from polypeptides having unsubstituted N-termini provided that the penultimate residue is proline. The polypeptide is Probable dipeptidyl-aminopeptidase B (dapB) (Neosartorya fischeri (strain ATCC 1020 / DSM 3700 / CBS 544.65 / FGSC A1164 / JCM 1740 / NRRL 181 / WB 181) (Aspergillus fischerianus)).